Consider the following 733-residue polypeptide: Lanosterol synthase (733 aa).

Thr2 is modified (N-acetylthreonine). The PFTB 1 repeat unit spans residues 125–166; the sequence is REEMVRYLRSVQLPDGGWGLHIEDKSTVFGTALNYVALRILG. The active-site Proton donor is the Asp456. 3 PFTB repeats span residues 484 to 529, 561 to 601, and 613 to 654; these read LCDA…MIDY, LNQG…ACMG, and VAQA…HSTC.

The protein belongs to the terpene cyclase/mutase family. As to quaternary structure, monomer.

Its subcellular location is the endoplasmic reticulum membrane. The enzyme catalyses (S)-2,3-epoxysqualene = lanosterol. The protein operates within terpene metabolism; lanosterol biosynthesis; lanosterol from farnesyl diphosphate: step 3/3. Key enzyme in the cholesterol biosynthesis pathway. Catalyzes the cyclization of (S)-2,3 oxidosqualene to lanosterol, a reaction that forms the sterol nucleus. Through the production of lanosterol may regulate lens protein aggregation and increase transparency. This is Lanosterol synthase from Mus musculus (Mouse).